The sequence spans 352 residues: Inner membrane protein YeeA (352 aa).

Residues M1 to R25 lie on the Cytoplasmic side of the membrane. Transmembrane regions (helical) follow at residues V26–T46 and W47–P67. A topological domain (cytoplasmic) is located at residue R68. Residues A69–L89 traverse the membrane as a helical segment. A topological domain (periplasmic) is located at residue E90. A helical transmembrane segment spans residues L91–L111. The Cytoplasmic segment spans residues A112–P117. The chain crosses the membrane as a helical span at residues Y118 to I138. Topologically, residues D139 to D147 are periplasmic. The chain crosses the membrane as a helical span at residues V148–I168. Topologically, residues H169–K352 are cytoplasmic.

It localises to the cell inner membrane. In Escherichia coli (strain K12), this protein is Inner membrane protein YeeA (yeeA).